The sequence spans 489 residues: Protein translocase subunit SecY (489 aa).

At 1-20 the chain is on the cytoplasmic side; sequence MGWKDAAEPVLSRMPAVARP. A helical transmembrane segment spans residues 21 to 47; sequence EGHVPFRRKLGWTGGILVLYFFLTNVT. The Extracellular segment spans residues 48–59; it reads LFGLDAATANDL. Residues 60–67 constitute an intramembrane region (helical); it reads FGQFRSIL. Residues 60–88 traverse the membrane as a discontinuously helical segment; sequence FGQFRSILAGQQGSVLQLGIGPIVTASIV. The stretch at 68–79 is an intramembrane region; the sequence is AGQQGSVLQLGI. An intramembrane region (helical) is located at residues 80–88; that stretch reads GPIVTASIV. At 89–110 the chain is on the cytoplasmic side; that stretch reads LQLLGGADLLGLDTDNNPRDQV. The helical transmembrane segment at 111-135 threads the bilayer; the sequence is LYQGLQKLLVGVMICLTGLPMVFAG. The Extracellular portion of the chain corresponds to 136-153; that stretch reads NFLPADQAVATSLGIGTV. The helical transmembrane segment at 154–178 threads the bilayer; it reads GVKGLIFAQIAVGGVLILFMDEIVS. The Cytoplasmic segment spans residues 179 to 184; it reads KWGVGS. A helical membrane pass occupies residues 185–203; sequence GVGLFIIAGVSQQLVGGLF. Over 204–244 the chain is Extracellular; it reads SWQGLGGTSGFFATWIGIITGAIELPASPTDLLSTVFLGQG. A helical transmembrane segment spans residues 245–266; that stretch reads QLLALITTLLIFGIVVYAESVR. Topologically, residues 267–291 are cytoplasmic; the sequence is VEIPLSHARVKGARGRFPVKLIYAS. Residues 292–313 traverse the membrane as a helical segment; the sequence is VLPMILVRALQANIQFLGRFLN. Topologically, residues 314–364 are extracellular; it reads SSWVGMPAWLGQYTSGQVTGGLLYYLAPIQSRSDWMWFLGLTSADPLDIAI. Residues 365–384 form a helical membrane-spanning segment; the sequence is RVLIDLIFMIVGGAVFAIFW. Residues 385 to 427 lie on the Cytoplasmic side of the membrane; that stretch reads VETTGMGPKSTAQQIQNSGMQIPGFRRNPQVIERVMERYIPQV. A helical membrane pass occupies residues 428-446; sequence TVIGGALVGLLAVMANMLG. The Extracellular portion of the chain corresponds to 447–450; it reads TIGA. Residues 451 to 465 form a helical membrane-spanning segment; it reads VSGTGLLLTVSITYK. Residues 466–488 are Cytoplasmic-facing; it reads LYEEIAEEQLMEMHPMMRNMFGS.

The protein belongs to the SecY/SEC61-alpha family. Component of the Sec protein translocase complex. Heterotrimer consisting of alpha (SecY), beta (SecG) and gamma (SecE) subunits. The heterotrimers can form oligomers, although 1 heterotrimer is thought to be able to translocate proteins. Interacts with the ribosome. May interact with SecDF, and other proteins may be involved.

Its subcellular location is the cell membrane. The central subunit of the protein translocation channel SecYEG. Consists of two halves formed by TMs 1-5 and 6-10. These two domains form a lateral gate at the front which open onto the bilayer between TMs 2 and 7, and are clamped together by SecE at the back. The channel is closed by both a pore ring composed of hydrophobic SecY resides and a short helix (helix 2A) on the extracellular side of the membrane which forms a plug. The plug probably moves laterally to allow the channel to open. The ring and the pore may move independently. In Haloferax volcanii (strain ATCC 29605 / DSM 3757 / JCM 8879 / NBRC 14742 / NCIMB 2012 / VKM B-1768 / DS2) (Halobacterium volcanii), this protein is Protein translocase subunit SecY.